The primary structure comprises 206 residues: Small ribosomal subunit protein uS4 (206 aa).

Positions 98–163 (MRLDNIVYRL…SEKFKTFVEN (66 aa)) constitute an S4 RNA-binding domain.

The protein belongs to the universal ribosomal protein uS4 family. In terms of assembly, part of the 30S ribosomal subunit. Contacts protein S5. The interaction surface between S4 and S5 is involved in control of translational fidelity.

One of the primary rRNA binding proteins, it binds directly to 16S rRNA where it nucleates assembly of the body of the 30S subunit. Functionally, with S5 and S12 plays an important role in translational accuracy. In Clostridium beijerinckii (strain ATCC 51743 / NCIMB 8052) (Clostridium acetobutylicum), this protein is Small ribosomal subunit protein uS4.